Consider the following 398-residue polypeptide: Acetate kinase (398 aa).

N8 provides a ligand contact to Mg(2+). K15 is a binding site for ATP. R89 contributes to the substrate binding site. The active-site Proton donor/acceptor is D146. ATP is bound by residues 206–210 (HIGNG), 283–285 (DMR), and 331–335 (GMGEN). E383 lines the Mg(2+) pocket.

It belongs to the acetokinase family. Homodimer. Mg(2+) serves as cofactor. Mn(2+) is required as a cofactor.

It localises to the cytoplasm. The catalysed reaction is acetate + ATP = acetyl phosphate + ADP. It functions in the pathway metabolic intermediate biosynthesis; acetyl-CoA biosynthesis; acetyl-CoA from acetate: step 1/2. Catalyzes the formation of acetyl phosphate from acetate and ATP. Can also catalyze the reverse reaction. This is Acetate kinase from Streptococcus pyogenes serotype M4 (strain MGAS10750).